We begin with the raw amino-acid sequence, 353 residues long: Photosystem II protein D1 (353 aa).

An N-acetylthreonine modification is found at Thr2. Residue Thr2 is modified to Phosphothreonine. Transmembrane regions (helical) follow at residues 29 to 46, 118 to 133, and 142 to 156; these read YIGWFGVLMIPTLLTATS, HFLLGVACYMGREWEL, and WIAVAYSAPVAAATA. His118 is a chlorophyll a binding site. Tyr126 serves as a coordination point for pheophytin a. Residues Asp170 and Glu189 each contribute to the [CaMn4O5] cluster site. The chain crosses the membrane as a helical span at residues 197-218; it reads FHMLGVAGVFGSSLFSAMHGSL. His198 contacts chlorophyll a. A quinone contacts are provided by residues His215 and 264–265; that span reads SF. His215 provides a ligand contact to Fe cation. Residue His272 coordinates Fe cation. The helical transmembrane segment at 274-288 threads the bilayer; sequence FLAAWPVVGIWFTAL. [CaMn4O5] cluster-binding residues include His332, Glu333, Asp342, and Ala344. Positions 345–353 are excised as a propeptide; it reads AMEAPSVNG.

The protein belongs to the reaction center PufL/M/PsbA/D family. As to quaternary structure, PSII is composed of 1 copy each of membrane proteins PsbA, PsbB, PsbC, PsbD, PsbE, PsbF, PsbH, PsbI, PsbJ, PsbK, PsbL, PsbM, PsbT, PsbX, PsbY, PsbZ, Psb30/Ycf12, at least 3 peripheral proteins of the oxygen-evolving complex and a large number of cofactors. It forms dimeric complexes. The D1/D2 heterodimer binds P680, chlorophylls that are the primary electron donor of PSII, and subsequent electron acceptors. It shares a non-heme iron and each subunit binds pheophytin, quinone, additional chlorophylls, carotenoids and lipids. D1 provides most of the ligands for the Mn4-Ca-O5 cluster of the oxygen-evolving complex (OEC). There is also a Cl(-1) ion associated with D1 and D2, which is required for oxygen evolution. The PSII complex binds additional chlorophylls, carotenoids and specific lipids. serves as cofactor. Tyr-161 forms a radical intermediate that is referred to as redox-active TyrZ, YZ or Y-Z. In terms of processing, C-terminally processed by CTPA; processing is essential to allow assembly of the oxygen-evolving complex and thus photosynthetic growth.

It localises to the plastid. Its subcellular location is the chloroplast thylakoid membrane. The enzyme catalyses 2 a plastoquinone + 4 hnu + 2 H2O = 2 a plastoquinol + O2. Functionally, photosystem II (PSII) is a light-driven water:plastoquinone oxidoreductase that uses light energy to abstract electrons from H(2)O, generating O(2) and a proton gradient subsequently used for ATP formation. It consists of a core antenna complex that captures photons, and an electron transfer chain that converts photonic excitation into a charge separation. The D1/D2 (PsbA/PsbD) reaction center heterodimer binds P680, the primary electron donor of PSII as well as several subsequent electron acceptors. The protein is Photosystem II protein D1 of Vigna unguiculata (Cowpea).